The chain runs to 89 residues: MKEKEAKWVVEGLVTEGHPSGMFRVQLDNGARVLGYISGKIRRKAIRIMQGDRVQIELSHYDLTKGRIIYRLPPPPIPKPKDSEDDSED.

Residues 1–73 form the S1-like domain; sequence MKEKEAKWVV…TKGRIIYRLP (73 aa).

Belongs to the IF-1 family. As to quaternary structure, component of the 30S ribosomal translation pre-initiation complex which assembles on the 30S ribosome in the order IF-2 and IF-3, IF-1 and N-formylmethionyl-tRNA(fMet); mRNA recruitment can occur at any time during PIC assembly.

The protein localises to the plastid. Its subcellular location is the chloroplast. One of the essential components for the initiation of protein synthesis. Stabilizes the binding of IF-2 and IF-3 on the 30S subunit to which N-formylmethionyl-tRNA(fMet) subsequently binds. Helps modulate mRNA selection, yielding the 30S pre-initiation complex (PIC). Upon addition of the 50S ribosomal subunit IF-1, IF-2 and IF-3 are released leaving the mature 70S translation initiation complex. The protein is Translation initiation factor IF-1, chloroplastic of Jasminum nudiflorum (Winter jasmine).